The primary structure comprises 76 residues: MEKLTILLLVTAVLMSTQALMQSGIEKRQRAKIKFFSKRKTTAERWWEGECYDWLRQCSSPAQCCSGNCGAHCKAW.

A signal peptide spans M1–A19. Residues L20–R45 constitute a propeptide that is removed on maturation. Disulfide bonds link C51–C65, C58–C69, and C64–C73.

This sequence belongs to the conotoxin O2 superfamily. As to expression, expressed by the venom duct.

Its subcellular location is the secreted. Functionally, probable neurotoxin. The protein is Conotoxin Im6.9 of Conus imperialis (Imperial cone).